We begin with the raw amino-acid sequence, 226 residues long: Fibronectin type III domain-containing protein 10 (226 aa).

A signal peptide spans 1–20; that stretch reads MRAPPLLLLLAACAPPPCAA. At 21–182 the chain is on the extracellular side; the sequence is AAPTPPGWEP…FTAEPAGMQD (162 aa). Residues 74 to 166 form the Fibronectin type-III domain; sequence PAGRSLRASV…PAAAAPETPE (93 aa). 2 N-linked (GlcNAc...) asparagine glycosylation sites follow: Asn-86 and Asn-109. Residues 183–203 traverse the membrane as a helical segment; the sequence is IVVAMTAVGGSICVMLVVICL. Over 204–226 the chain is Cytoplasmic; the sequence is LVAYITENLMRPALARPGLRRHP.

It localises to the membrane. In Homo sapiens (Human), this protein is Fibronectin type III domain-containing protein 10 (FNDC10).